A 233-amino-acid chain; its full sequence is MSDSAPEIETPVEEAPKAASPAKSPAKSPGRAKKAKKDGSDKPKKPKAIPTHPPVSEMVVNALKTLNEKGGSSVIAIKKFLVATYKVEIEKLLPFIKKFLKGAVLKGEVLQVKGTGASGSFKMPPPAKKVDRPESAPKKKATKTKTRVERKEKKVVAKKPKPAVEKKAAKPAAKKAAAKPAAKKAAAKPAAKKPAAKASPKKAAAKPKAKPTPKKSTPAKPKAAARKPAKKSK.

Disordered regions lie at residues 1 to 55 (MSDS…HPPV) and 115 to 233 (TGAS…KKSK). Positions 17-29 (KAASPAKSPAKSP) are enriched in low complexity. Residues 51-125 (THPPVSEMVV…GASGSFKMPP (75 aa)) enclose the H15 domain. Basic and acidic residues-rich tracts occupy residues 128–137 (KKVDRPESAP) and 146–155 (TRVERKEKKV). Composition is skewed to basic residues over residues 172-213 (AAKK…KPTP) and 223-233 (AAARKPAKKSK).

The protein belongs to the histone H1/H5 family.

It localises to the nucleus. Its subcellular location is the chromosome. Its function is as follows. Histones H1 are necessary for the condensation of nucleosome chains into higher-order structures. This chain is Histone H1-I, found in Glyptotendipes barbipes (Midge).